A 326-amino-acid chain; its full sequence is Olfactory receptor 10X1 (326 aa).

Residues Met-1–Thr-41 lie on the Extracellular side of the membrane. An N-linked (GlcNAc...) asparagine glycan is attached at Asn-21. The helical transmembrane segment at Phe-42–Met-62 threads the bilayer. At Gly-63–Ser-70 the chain is on the cytoplasmic side. A helical membrane pass occupies residues Leu-71–Leu-91. Topologically, residues Thr-92–Leu-115 are extracellular. An intrachain disulfide couples Cys-113 to Cys-205. Residues Gln-116–Tyr-136 form a helical membrane-spanning segment. Over Asp-137–Ile-155 the chain is Cytoplasmic. The chain crosses the membrane as a helical span at residues Val-156 to Thr-176. At Ala-177–Phe-213 the chain is on the extracellular side. N-linked (GlcNAc...) asparagine glycosylation is present at Asn-209. The helical transmembrane segment at Ile-214–Thr-233 threads the bilayer. Topologically, residues Asp-234–Ala-253 are cytoplasmic. The chain crosses the membrane as a helical span at residues Phe-254–Val-274. The Extracellular segment spans residues Tyr-275–Asp-284. Residues Thr-285–Leu-305 traverse the membrane as a helical segment. Over Arg-306–Lys-326 the chain is Cytoplasmic.

Belongs to the G-protein coupled receptor 1 family.

The protein localises to the cell membrane. In terms of biological role, odorant receptor. The chain is Olfactory receptor 10X1 (OR10X1) from Homo sapiens (Human).